Here is a 235-residue protein sequence, read N- to C-terminus: Fibrillarin-like rRNA/tRNA 2'-O-methyltransferase (235 aa).

Residues 91-92 (TT), 110-111 (EF), 137-138 (DA), and 157-160 (DVAQ) contribute to the S-adenosyl-L-methionine site.

It belongs to the methyltransferase superfamily. Fibrillarin family. Interacts with nop5. Component of box C/D small ribonucleoprotein (sRNP) particles that contain rpl7ae, FlpA and nop5, plus a guide RNA.

Its function is as follows. Involved in pre-rRNA and tRNA processing. Utilizes the methyl donor S-adenosyl-L-methionine to catalyze the site-specific 2'-hydroxyl methylation of ribose moieties in rRNA and tRNA. Site specificity is provided by a guide RNA that base pairs with the substrate. Methylation occurs at a characteristic distance from the sequence involved in base pairing with the guide RNA. The polypeptide is Fibrillarin-like rRNA/tRNA 2'-O-methyltransferase (Pyrobaculum aerophilum (strain ATCC 51768 / DSM 7523 / JCM 9630 / CIP 104966 / NBRC 100827 / IM2)).